A 156-amino-acid chain; its full sequence is MGRIQRNKIKVEIKKLSHGKDLPLPCYATMQSAGMDLYAALGNSIVLNPLERLLIPTGIVIVIPNGFEGQIRPRSGLAAKYGITVLNSPGTIDSDYRGEVKVCLINLSNQPYEIKRGDRIAQILIAPVFRVIWDDAERLCTEETERSAGGFGSSGR.

Residues 74–76 (RSG), N87, 91–93 (TID), and K101 contribute to the substrate site.

The protein belongs to the dUTPase family. Mg(2+) serves as cofactor.

It carries out the reaction dUTP + H2O = dUMP + diphosphate + H(+). The protein operates within pyrimidine metabolism; dUMP biosynthesis; dUMP from dCTP (dUTP route): step 2/2. Functionally, this enzyme is involved in nucleotide metabolism: it produces dUMP, the immediate precursor of thymidine nucleotides and it decreases the intracellular concentration of dUTP so that uracil cannot be incorporated into DNA. This is Deoxyuridine 5'-triphosphate nucleotidohydrolase from Wolbachia sp. subsp. Brugia malayi (strain TRS).